A 172-amino-acid polypeptide reads, in one-letter code: Adenine phosphoribosyltransferase (172 aa).

The protein belongs to the purine/pyrimidine phosphoribosyltransferase family. In terms of assembly, homodimer.

It is found in the cytoplasm. The catalysed reaction is AMP + diphosphate = 5-phospho-alpha-D-ribose 1-diphosphate + adenine. It participates in purine metabolism; AMP biosynthesis via salvage pathway; AMP from adenine: step 1/1. Its function is as follows. Catalyzes a salvage reaction resulting in the formation of AMP, that is energically less costly than de novo synthesis. This is Adenine phosphoribosyltransferase from Exiguobacterium sp. (strain ATCC BAA-1283 / AT1b).